Reading from the N-terminus, the 371-residue chain is Epoxyqueuosine reductase (371 aa).

Asp-137 functions as the Proton donor in the catalytic mechanism. The 4Fe-4S ferredoxin-type domain occupies 179-211 (IPLPVDTPVENQCGKCTACISSCPTNAILENGV). Residues Cys-191, Cys-194, Cys-197, Cys-201, Cys-217, Cys-244, Cys-247, and Cys-251 each contribute to the [4Fe-4S] cluster site.

It belongs to the QueG family. In terms of assembly, monomer. Requires cob(II)alamin as cofactor. [4Fe-4S] cluster is required as a cofactor.

Its subcellular location is the cytoplasm. It catalyses the reaction epoxyqueuosine(34) in tRNA + AH2 = queuosine(34) in tRNA + A + H2O. Its pathway is tRNA modification; tRNA-queuosine biosynthesis. Catalyzes the conversion of epoxyqueuosine (oQ) to queuosine (Q), which is a hypermodified base found in the wobble positions of tRNA(Asp), tRNA(Asn), tRNA(His) and tRNA(Tyr). In Aliivibrio fischeri (strain ATCC 700601 / ES114) (Vibrio fischeri), this protein is Epoxyqueuosine reductase.